The chain runs to 446 residues: Coagulation factor VII (446 aa).

The signal sequence occupies residues 1–24 (MVPQAHGLLLLCFLLQLQGPLGTA). A propeptide spanning residues 25–41 (VFITQEEAHGVLHRQRR) is cleaved from the precursor. Residues 42–86 (ANSLLEELWPGSLERECNEEQCSFEEAREIFKSPERTKQFWIVYS) form the Gla domain. 4-carboxyglutamate occurs at positions 47, 48, 55, 57, 60, 61, 66, 67, 70, and 76. Cys-58 and Cys-63 are disulfide-bonded. One can recognise an EGF-like 1; calcium-binding domain in the interval 87 to 123 (DGDQCASNPCQNGGTCQDHLKSYVCFCLLDFEGRNCE). 10 disulfide bridges follow: Cys-91-Cys-102, Cys-96-Cys-111, Cys-113-Cys-122, Cys-132-Cys-143, Cys-139-Cys-153, Cys-155-Cys-168, Cys-176-Cys-303, Cys-200-Cys-205, Cys-219-Cys-235, and Cys-351-Cys-370. Ser-93 carries O-linked (Glc...) serine; alternate glycosylation. O-linked (Xyl...) serine; alternate glycosylation is present at Ser-93. Residue Asp-104 is modified to (3R)-3-hydroxyaspartate. Residues 128–169 (EQLICANENGDCDQYCRDHVGTKRTCSCHEDYTLQPDEVSCK) form the EGF-like 2 domain. N-linked (GlcNAc...) asparagine glycosylation occurs at Asn-186. Positions 194–433 (IVGGNVCPKG…YIDWLVRHMD (240 aa)) constitute a Peptidase S1 domain. Residue His-234 is the Charge relay system of the active site. A glycan (N-linked (GlcNAc...) asparagine) is linked at Asn-244. Residue Asp-283 is the Charge relay system of the active site. Asp-379 contacts substrate. Cysteines 381 and 409 form a disulfide. Ser-385 acts as the Charge relay system in catalysis.

The protein belongs to the peptidase S1 family. As to quaternary structure, heterodimer of a light chain and a heavy chain linked by a disulfide bond. The vitamin K-dependent, enzymatic carboxylation of some glutamate residues allows the modified protein to bind calcium. In terms of processing, the iron and 2-oxoglutarate dependent 3-hydroxylation of aspartate and asparagine is (R) stereospecific within EGF domains. Post-translationally, can be either O-glucosylated or O-xylosylated at Ser-93 by POGLUT1. Plasma and liver.

The protein localises to the secreted. The catalysed reaction is Selective cleavage of Arg-|-Ile bond in factor X to form factor Xa.. In terms of biological role, initiates the extrinsic pathway of blood coagulation. Serine protease that circulates in the blood in a zymogen form. Factor VII is converted to factor VIIa by factor Xa, factor XIIa, factor IXa, or thrombin by minor proteolysis. In the presence of tissue factor and calcium ions, factor VIIa then converts factor X to factor Xa by limited proteolysis. Factor VIIa also converts factor IX to factor IXa in the presence of tissue factor and calcium. The polypeptide is Coagulation factor VII (F7) (Mus musculus (Mouse)).